The sequence spans 573 residues: Ribosomal RNA-processing protein 9 (573 aa).

Residues 1-63 (MSDVTQQKKR…FEGENPADKR (63 aa)) form a disordered region. At serine 2 the chain carries N-acetylserine. The span at 25–58 (DEEITDPSSNEDEQLEVSDEEDALESEEEFEGEN) shows a compositional bias: acidic residues. A coiled-coil region spans residues 32-106 (SSNEDEQLEV…KERTIDEYNN (75 aa)). Position 50 is a phosphoserine (serine 50). WD repeat units follow at residues 234–273 (GHYD…PVKV), 278–317 (DRRG…QLEI), 320–359 (GHHD…RLTF), 397–435 (FCEG…PIFT), 471–509 (QPFW…RSFE), and 516–562 (GAKG…ARNG).

The protein belongs to the WD repeat RRP9 family. In terms of assembly, interacts with UTP25. Component of the ribosomal small subunit (SSU) processome composed of at least 40 protein subunits and snoRNA U3.

The protein localises to the nucleus. It localises to the nucleolus. Functionally, involved in nucleolar processing of pre-18S ribosomal RNA. Required for efficient pre-rRNA cleavage at sites A0, A1 and A2, and biosynthesis of 18S rRNA. The chain is Ribosomal RNA-processing protein 9 (RRP9) from Saccharomyces cerevisiae (strain ATCC 204508 / S288c) (Baker's yeast).